The chain runs to 637 residues: MGRIIGIDLGTTNSCVAVLDGDKPRVLENAEGERTTASVIAYTEGETLVGQPAKRQAVTNPQNTLYAIKRLIGRRFEDEEVQRDIEIMPFNIVKADNGDAWVEAQGQKMAAPQVSAEVLKKMKKTAEDFLGEEVTGAVVTVPAYFNDAQRQATKDAGRIAGLDVKRIINEPTAAALAYGLDKQGGDRTIAVYDLGGGTFDISIIEIDEVEGEKTFEVLSTNGDTHLGGEDFDNRMINYLVDEFKKEQGIDLKADPLAMQRVKEAAEKAKIELSSTTQTDVNLPYVTADATGPKHMNIKVTRAKLESLVEDLVQRSLEPLKVALADADLSVGEITDVILVGGQTRMPMVQAKVTEFFGKEPRKDVNPDEAVAMGAAVQGGVLAGEVKDVLLLDVTPLSFGIETMGGVMTKLIEKNTTIPTKADQVFSTAEDNQSAVTIHVLQGERKQATYNKSLGQFNLEGIQPAPRGMPQVEVTFDLDADGILNVSAKDKATGKEQKITIQASGGLSEEEIEAMVQEAEANKEADKKFEELVTARNQADQMIHGTKKQVEEAGEALPADEKAKIEAAIEALESVKSGDDKEAIDAKVQELMQAAQKLMEIAQQKAQAEQAGADAGEQPKQDDDVVDAEFEEVKEDKK.

Position 198 is a phosphothreonine; by autocatalysis (Thr-198). A compositionally biased stretch (low complexity) spans 601–615 (AQQKAQAEQAGADAG). The segment at 601–637 (AQQKAQAEQAGADAGEQPKQDDDVVDAEFEEVKEDKK) is disordered. Positions 623-637 (DVVDAEFEEVKEDKK) are enriched in acidic residues.

This sequence belongs to the heat shock protein 70 family.

In terms of biological role, acts as a chaperone. The chain is Chaperone protein DnaK from Vibrio atlanticus (strain LGP32) (Vibrio splendidus (strain Mel32)).